The primary structure comprises 119 residues: Bombesin (119 aa).

The first 29 residues, 1 to 29, serve as a signal peptide directing secretion; sequence MSAIPLNRILPLGFLFHLLIFSFISLSSC. Residues 30 to 44 constitute a propeptide that is removed on maturation; the sequence is MEFVEDPNNQGRISL. Position 58 is a methionine amide (methionine 58). The propeptide occupies 62–119; it reads SLQDTDFEEMESFAKRNVENMRAALLQEQNRAESERELRHAQLVVRNILEQYLKNMQN.

The protein belongs to the bombesin/neuromedin-B/ranatensin family. Localized to the cutaneous granular glands in the skin and the brain.

The protein resides in the secreted. Functionally, stimulates smooth muscle contraction. Role in induction of hypothermia, stimulation of DNA replication and release of many gastrointestinal hormones. This is Bombesin from Bombina orientalis (Oriental fire-bellied toad).